We begin with the raw amino-acid sequence, 132 residues long: CLAVATA3/ESR (CLE)-related protein TDIF (132 aa).

An N-terminal signal peptide occupies residues 1 to 26; sequence MDIDLLWSFGGWFFILFPETINYCMA. A helical membrane pass occupies residues 42–62; sequence SCSSLFFVALLIITILITMLQ. A compositionally biased stretch (polar residues) spans 68–77; sequence EVTSLPTHQP. The tract at residues 68-132 is disordered; sequence EVTSLPTHQP…PSGPNPISNR (65 aa). Residues 87–96 are compositionally biased toward low complexity; the sequence is STSSTATTTT. Over residues 101-111 the composition is skewed to basic residues; the sequence is KRTHHQSHPKP. Hydroxyproline occurs at positions 123 and 126. Pro-126 carries an O-linked (Ara...) hydroxyproline glycan.

The protein belongs to the CLV3/ESR signal peptide family. In terms of assembly, interacts specifically with the leucine-rich repeat receptor-like protein kinase TDR. In terms of processing, the TDIFp peptide contains two hydroxprolines, but hydroxylation had no direct effect on TDIFp activity. The O-glycosylation (arabinosylation) of the hydroxyproline Pro-126 enhances binding affinity of the TDIFp peptide for its receptor.

It localises to the secreted. Its subcellular location is the extracellular space. It is found in the cell membrane. Extracellular signal peptide that regulates cell fate. Represses tracheary element differentiation but promotes the formation of procambial cells adjacent to phloem cells in the veins. The chain is CLAVATA3/ESR (CLE)-related protein TDIF from Zinnia elegans (Garden zinnia).